The chain runs to 94 residues: MAFGTDPTPDGLANPPIDDLMKHADSKYALAIFAAKRARQINSYFTQLNEGLLQNIGPLVEYQNNEKPLSIAFREIDEGLLEETLGEDDANEGN.

Belongs to the RNA polymerase subunit omega family. In terms of assembly, the RNAP catalytic core consists of 2 alpha, 1 beta, 1 beta' and 1 omega subunit. When a sigma factor is associated with the core the holoenzyme is formed, which can initiate transcription.

It carries out the reaction RNA(n) + a ribonucleoside 5'-triphosphate = RNA(n+1) + diphosphate. In terms of biological role, promotes RNA polymerase assembly. Latches the N- and C-terminal regions of the beta' subunit thereby facilitating its interaction with the beta and alpha subunits. The protein is DNA-directed RNA polymerase subunit omega of Bifidobacterium longum (strain DJO10A).